The following is a 311-amino-acid chain: Ribonuclease HIII (311 aa).

In terms of domain architecture, RNase H type-2 spans 95–311; sequence MSIVGSDEVG…NTEKALRLLR (217 aa). 3 residues coordinate a divalent metal cation: Asp-101, Glu-102, and Asp-206.

It belongs to the RNase HII family. RnhC subfamily. The cofactor is Mn(2+). Mg(2+) is required as a cofactor.

It localises to the cytoplasm. The catalysed reaction is Endonucleolytic cleavage to 5'-phosphomonoester.. Functionally, endonuclease that specifically degrades the RNA of RNA-DNA hybrids. The polypeptide is Ribonuclease HIII (Bacillus cereus (strain ATCC 14579 / DSM 31 / CCUG 7414 / JCM 2152 / NBRC 15305 / NCIMB 9373 / NCTC 2599 / NRRL B-3711)).